Reading from the N-terminus, the 873-residue chain is Probable beta-glucosidase A (873 aa).

An N-terminal signal peptide occupies residues 1 to 19 (MRFGWLEVAALTAASVANA). N-linked (GlcNAc...) asparagine glycans are attached at residues Asn-71, Asn-222, and Asn-263. Residue Asp-291 is part of the active site. 9 N-linked (GlcNAc...) asparagine glycosylation sites follow: Asn-326, Asn-333, Asn-365, Asn-453, Asn-534, Asn-553, Asn-575, Asn-679, and Asn-725. The disordered stretch occupies residues 731–764 (DSSDDPNYGWQDSEYIPEGARDGSPQPLLKAGGA).

Belongs to the glycosyl hydrolase 3 family.

Its subcellular location is the secreted. The catalysed reaction is Hydrolysis of terminal, non-reducing beta-D-glucosyl residues with release of beta-D-glucose.. It participates in glycan metabolism; cellulose degradation. In terms of biological role, beta-glucosidases are one of a number of cellulolytic enzymes involved in the degradation of cellulosic biomass. Catalyzes the last step releasing glucose from the inhibitory cellobiose. This is Probable beta-glucosidase A (bglA) from Aspergillus fumigatus (strain ATCC MYA-4609 / CBS 101355 / FGSC A1100 / Af293) (Neosartorya fumigata).